We begin with the raw amino-acid sequence, 143 residues long: Small ribosomal subunit protein bS6 (143 aa).

Residues Gly-95 to Ala-143 form a disordered region. A compositionally biased stretch (basic and acidic residues) spans Lys-105–Asp-121.

It belongs to the bacterial ribosomal protein bS6 family.

Its function is as follows. Binds together with bS18 to 16S ribosomal RNA. The chain is Small ribosomal subunit protein bS6 from Xylella fastidiosa (strain M23).